We begin with the raw amino-acid sequence, 921 residues long: DNA mismatch repair protein MutS 1 (921 aa).

619-626 (GPNMSGKS) is a binding site for ATP. Residues 837–887 (FRDGAAQSGGAAAGSTAEPVATDGDPEHAPGEAAAEGPKGDERAASLDSET) are disordered. Residues 840 to 853 (GAAQSGGAAAGSTA) show a composition bias toward low complexity.

The protein belongs to the DNA mismatch repair MutS family.

In terms of biological role, this protein is involved in the repair of mismatches in DNA. It is possible that it carries out the mismatch recognition step. This protein has a weak ATPase activity. The chain is DNA mismatch repair protein MutS 1 from Haloarcula marismortui (strain ATCC 43049 / DSM 3752 / JCM 8966 / VKM B-1809) (Halobacterium marismortui).